A 231-amino-acid chain; its full sequence is Biosynthetic peptidoglycan transglycosylase (231 aa).

The chain crosses the membrane as a helical span at residues leucine 10 to valine 30.

Belongs to the glycosyltransferase 51 family.

The protein localises to the cell inner membrane. It carries out the reaction [GlcNAc-(1-&gt;4)-Mur2Ac(oyl-L-Ala-gamma-D-Glu-L-Lys-D-Ala-D-Ala)](n)-di-trans,octa-cis-undecaprenyl diphosphate + beta-D-GlcNAc-(1-&gt;4)-Mur2Ac(oyl-L-Ala-gamma-D-Glu-L-Lys-D-Ala-D-Ala)-di-trans,octa-cis-undecaprenyl diphosphate = [GlcNAc-(1-&gt;4)-Mur2Ac(oyl-L-Ala-gamma-D-Glu-L-Lys-D-Ala-D-Ala)](n+1)-di-trans,octa-cis-undecaprenyl diphosphate + di-trans,octa-cis-undecaprenyl diphosphate + H(+). It functions in the pathway cell wall biogenesis; peptidoglycan biosynthesis. Functionally, peptidoglycan polymerase that catalyzes glycan chain elongation from lipid-linked precursors. This Dechloromonas aromatica (strain RCB) protein is Biosynthetic peptidoglycan transglycosylase.